A 31-amino-acid polypeptide reads, in one-letter code: Conotoxin pc6d (31 aa).

Disulfide bonds link Cys-2/Cys-20, Cys-9/Cys-25, and Cys-19/Cys-29.

The protein belongs to the conotoxin O1 superfamily. As to expression, expressed by the venom duct.

It localises to the secreted. The chain is Conotoxin pc6d from Conus pictus (Cone snail).